The chain runs to 61 residues: Protein CopA/IncA (61 aa).

In terms of biological role, controls the copy number in gene replication. The sequence is that of Protein CopA/IncA (copA) from Escherichia coli.